A 140-amino-acid chain; its full sequence is Nucleoside diphosphate kinase (140 aa).

The ATP site is built by Lys11, Phe59, Arg87, Thr93, Arg104, and Asn114. His117 functions as the Pros-phosphohistidine intermediate in the catalytic mechanism.

This sequence belongs to the NDK family. As to quaternary structure, homotetramer. The cofactor is Mg(2+).

It localises to the cytoplasm. It carries out the reaction a 2'-deoxyribonucleoside 5'-diphosphate + ATP = a 2'-deoxyribonucleoside 5'-triphosphate + ADP. The catalysed reaction is a ribonucleoside 5'-diphosphate + ATP = a ribonucleoside 5'-triphosphate + ADP. In terms of biological role, major role in the synthesis of nucleoside triphosphates other than ATP. The ATP gamma phosphate is transferred to the NDP beta phosphate via a ping-pong mechanism, using a phosphorylated active-site intermediate. The polypeptide is Nucleoside diphosphate kinase (Methylobacterium nodulans (strain LMG 21967 / CNCM I-2342 / ORS 2060)).